We begin with the raw amino-acid sequence, 75 residues long: Conotoxin Im23.5 (75 aa).

The signal sequence occupies residues 1-23 (MKFFTCLLLLLVVLTVVFDNVDA). Disulfide bonds link C24–C28, C37–C40, and C41–C43. A propeptide spanning residues 24–50 (CDRSCTGVMGHPSCATCCACFTSAGKR) is cleaved from the precursor.

In terms of tissue distribution, expressed by the venom duct.

It is found in the secreted. In terms of biological role, probable neurotoxin. The sequence is that of Conotoxin Im23.5 from Conus imperialis (Imperial cone).